The following is a 216-amino-acid chain: MTAPNPDPRRLWDISPPLSPATPVWPGDTPFQQQPAWQIDAQCPVNVGRITLSPHTGAHADAPLHYAADGAPIGAVPLAPYLGRCRVIHCIGAAPLVQPHHVEHALDALPPRVLLRTYRQAPLAQWDPDFCAVSPDTIALLAAHGVQLVGIDTPSLDPQDSKTMDAHNAVRRHGLAILEGIVLDQVDAGDYELIALPLRFAALDASPVRAVLRSLD.

Tryptophan 25 provides a ligand contact to substrate. Positions 55, 59, and 61 each coordinate Zn(2+). Residue histidine 65 is the Proton donor/acceptor of the active site. The Zn(2+) site is built by histidine 167 and glutamate 179.

This sequence belongs to the Cyclase 1 superfamily. KynB family. As to quaternary structure, homodimer. Requires Zn(2+) as cofactor.

The enzyme catalyses N-formyl-L-kynurenine + H2O = L-kynurenine + formate + H(+). It participates in amino-acid degradation; L-tryptophan degradation via kynurenine pathway; L-kynurenine from L-tryptophan: step 2/2. Its function is as follows. Catalyzes the hydrolysis of N-formyl-L-kynurenine to L-kynurenine, the second step in the kynurenine pathway of tryptophan degradation. In Cupriavidus taiwanensis (strain DSM 17343 / BCRC 17206 / CCUG 44338 / CIP 107171 / LMG 19424 / R1) (Ralstonia taiwanensis (strain LMG 19424)), this protein is Kynurenine formamidase.